We begin with the raw amino-acid sequence, 485 residues long: Cysteine--tRNA ligase (485 aa).

C27 is a binding site for Zn(2+). The 'HIGH' region motif lies at 29-39 (ITAYDLCHIGH). Residues C208, H233, and E237 each coordinate Zn(2+). Residues 265-269 (KMSKS) carry the 'KMSKS' region motif. K268 provides a ligand contact to ATP.

Belongs to the class-I aminoacyl-tRNA synthetase family. Monomer. The cofactor is Zn(2+).

It localises to the cytoplasm. The enzyme catalyses tRNA(Cys) + L-cysteine + ATP = L-cysteinyl-tRNA(Cys) + AMP + diphosphate. The protein is Cysteine--tRNA ligase of Nitratidesulfovibrio vulgaris (strain ATCC 29579 / DSM 644 / CCUG 34227 / NCIMB 8303 / VKM B-1760 / Hildenborough) (Desulfovibrio vulgaris).